The following is a 354-amino-acid chain: Ornithine transcarbamylase, mitochondrial (354 aa).

The transit peptide at 1–32 directs the protein to the mitochondrion; sequence MLFHLRTLLNNAALRNGHNFVVRNFRCGQPLQ. Residue Lys70 is modified to N6-acetyllysine; alternate. At Lys70 the chain carries N6-succinyllysine; alternate. At Lys80 the chain carries N6-succinyllysine. Lys88 carries the post-translational modification N6-acetyllysine; alternate. The residue at position 88 (Lys88) is an N6-succinyllysine; alternate. At Ser133 the chain carries Phosphoserine. Residues Lys144, Lys221, Lys231, and Lys238 each carry the N6-acetyllysine; alternate modification. Residues Lys144, Lys221, Lys231, and Lys238 each carry the N6-succinyllysine; alternate modification. Residue Lys243 is modified to N6-acetyllysine. Asp263 is a catalytic residue. 2 positions are modified to N6-succinyllysine: Lys274 and Lys289. Lys292 is subject to N6-acetyllysine; alternate. Lys292 carries the N6-succinyllysine; alternate modification. The active site involves Cys303. N6-acetyllysine; alternate is present on Lys307. Residue Lys307 is modified to N6-succinyllysine; alternate.

The protein belongs to the aspartate/ornithine carbamoyltransferase superfamily. OTCase family. In terms of assembly, homotrimer. In terms of processing, acetylation at Lys-88 negatively regulates ornithine carbamoyltransferase activity in response to nutrient signals.

It localises to the mitochondrion matrix. The catalysed reaction is carbamoyl phosphate + L-ornithine = L-citrulline + phosphate + H(+). The protein operates within nitrogen metabolism; urea cycle; L-citrulline from L-ornithine and carbamoyl phosphate: step 1/1. With respect to regulation, negatively regulated by lysine acetylation. In terms of biological role, catalyzes the second step of the urea cycle, the condensation of carbamoyl phosphate with L-ornithine to form L-citrulline. The urea cycle ensures the detoxification of ammonia by converting it to urea for excretion. This chain is Ornithine transcarbamylase, mitochondrial, found in Bos taurus (Bovine).